Here is a 753-residue protein sequence, read N- to C-terminus: Replication restart protein PriA (753 aa).

Residues Ser-228–Leu-395 enclose the Helicase ATP-binding domain. Gly-241–Thr-248 lines the ATP pocket. The short motif at Asp-337–His-340 is the DEAH box element. Residues Cys-458, Cys-461, Cys-467, Cys-470, Cys-485, Cys-488, Cys-499, and Cys-502 each coordinate Zn(2+). The Helicase C-terminal domain maps to Arg-491 to Ile-646.

It belongs to the helicase family. PriA subfamily. In terms of assembly, component of the replication restart primosome. Requires Zn(2+) as cofactor.

It catalyses the reaction Couples ATP hydrolysis with the unwinding of duplex DNA by translocating in the 3'-5' direction.. The enzyme catalyses ATP + H2O = ADP + phosphate + H(+). Functionally, initiates the restart of stalled replication forks, which reloads the replicative helicase on sites other than the origin of replication. Recognizes and binds to abandoned replication forks and remodels them to uncover a helicase loading site. Promotes assembly of the primosome at these replication forks. In Chlamydia muridarum (strain MoPn / Nigg), this protein is Replication restart protein PriA.